Here is a 398-residue protein sequence, read N- to C-terminus: Phosphoglycerate kinase (398 aa).

Residues 21 to 23 (DFN), Arg36, 59 to 62 (HLGR), Arg119, and Arg157 contribute to the substrate site. ATP is bound by residues Lys208, Gly296, Glu327, and 354-357 (GGDS).

This sequence belongs to the phosphoglycerate kinase family. As to quaternary structure, monomer.

The protein resides in the cytoplasm. It carries out the reaction (2R)-3-phosphoglycerate + ATP = (2R)-3-phospho-glyceroyl phosphate + ADP. Its pathway is carbohydrate degradation; glycolysis; pyruvate from D-glyceraldehyde 3-phosphate: step 2/5. The sequence is that of Phosphoglycerate kinase from Streptococcus pneumoniae serotype 2 (strain D39 / NCTC 7466).